Here is a 122-residue protein sequence, read N- to C-terminus: Large ribosomal subunit protein uL14 (122 aa).

This sequence belongs to the universal ribosomal protein uL14 family. Part of the 50S ribosomal subunit. Forms a cluster with proteins L3 and L19. In the 70S ribosome, L14 and L19 interact and together make contacts with the 16S rRNA in bridges B5 and B8.

Functionally, binds to 23S rRNA. Forms part of two intersubunit bridges in the 70S ribosome. This Desulfitobacterium hafniense (strain DSM 10664 / DCB-2) protein is Large ribosomal subunit protein uL14.